The following is a 395-amino-acid chain: Cytoplasmic 60S subunit biogenesis factor REI1 homolog 2 (395 aa).

4 C2H2-type zinc fingers span residues 4-28, 68-92, 171-194, and 222-249; these read LACN…SEWH, YSCG…SKSH, ACCL…HKFH, and FVCL…AKGH.

This sequence belongs to the REI1 family. In terms of assembly, can form homodimer. Interacts with RLP24, RLP24A, RPL24B, EBP1 and JJJ1.

Its subcellular location is the cytoplasm. In terms of biological role, pre-60S-associated factor involved in the cytoplasmic maturation of the 60S subunit. Involved in the dissociation and recycling of other late pre-60S factors before newly synthesized large ribosomal subunits enter translation. Can complement the growth defect of a yeast mutant lacking REI1. Required for leaf growth under cold temperature conditions. This Arabidopsis thaliana (Mouse-ear cress) protein is Cytoplasmic 60S subunit biogenesis factor REI1 homolog 2.